The following is a 241-amino-acid chain: PHD finger protein ALFIN-LIKE 1 (241 aa).

Position 2 is an N-acetylalanine (Ala2). The segment at 142–182 is disordered; it reads DGKPSMDLGSKSRNGVKRSIEGQTKSTPKLMEESYEDEDDE. A PHD-type zinc finger spans residues 185–237; it reads DTLCGSCGGNYTNDEFWICCDVCERWYHGKCVKITPAKAESIKQYKCPSCCTK.

The protein belongs to the Alfin family. As to quaternary structure, interacts with H3K4me3 and to a lesser extent with H3K4me2. Ubiquitously expressed.

It localises to the nucleus. Histone-binding component that specifically recognizes H3 tails trimethylated on 'Lys-4' (H3K4me3), which mark transcription start sites of virtually all active genes. The polypeptide is PHD finger protein ALFIN-LIKE 1 (AL1) (Arabidopsis thaliana (Mouse-ear cress)).